Reading from the N-terminus, the 423-residue chain is Imidazolonepropionase (423 aa).

Fe(3+) is bound by residues H91 and H93. 2 residues coordinate Zn(2+): H91 and H93. 4-imidazolone-5-propanoate contacts are provided by R100, Y163, and H193. Y163 is an N-formimidoyl-L-glutamate binding site. H257 contacts Fe(3+). H257 provides a ligand contact to Zn(2+). Position 260 (Q260) interacts with 4-imidazolone-5-propanoate. D331 is a binding site for Fe(3+). Zn(2+) is bound at residue D331. The N-formimidoyl-L-glutamate site is built by N333 and G335. T336 serves as a coordination point for 4-imidazolone-5-propanoate.

It belongs to the metallo-dependent hydrolases superfamily. HutI family. Requires Zn(2+) as cofactor. Fe(3+) serves as cofactor.

It is found in the cytoplasm. The catalysed reaction is 4-imidazolone-5-propanoate + H2O = N-formimidoyl-L-glutamate. It participates in amino-acid degradation; L-histidine degradation into L-glutamate; N-formimidoyl-L-glutamate from L-histidine: step 3/3. In terms of biological role, catalyzes the hydrolytic cleavage of the carbon-nitrogen bond in imidazolone-5-propanoate to yield N-formimidoyl-L-glutamate. It is the third step in the universal histidine degradation pathway. In Bdellovibrio bacteriovorus (strain ATCC 15356 / DSM 50701 / NCIMB 9529 / HD100), this protein is Imidazolonepropionase.